A 182-amino-acid polypeptide reads, in one-letter code: Probable RNA 2'-phosphotransferase (182 aa).

Belongs to the KptA/TPT1 family.

Its function is as follows. Removes the 2'-phosphate from RNA via an intermediate in which the phosphate is ADP-ribosylated by NAD followed by a presumed transesterification to release the RNA and generate ADP-ribose 1''-2''-cyclic phosphate (APPR&gt;P). May function as an ADP-ribosylase. The protein is Probable RNA 2'-phosphotransferase of Herpetosiphon aurantiacus (strain ATCC 23779 / DSM 785 / 114-95).